Consider the following 249-residue polypeptide: DNA repair protein RecO (249 aa).

This sequence belongs to the RecO family.

In terms of biological role, involved in DNA repair and RecF pathway recombination. The chain is DNA repair protein RecO from Mycoplasma capricolum subsp. capricolum (strain California kid / ATCC 27343 / NCTC 10154).